A 351-amino-acid polypeptide reads, in one-letter code: MLKNDLFLRALKRQPCSRTPIWVMRQAGRYLPEYRAIREKTDFLTLCKTPELAMEVTIQPVELMGVDAAIIFSDILVVNEAMGMDVEIIETKGIKLTPPIRSQADINRLIIPEVQDKLGYVLDAIRLTKKVLDNRVPLIGFSGAAWTLFTYAVEGGGSKNYAFAKKMMYREPKMAHMLLSKISAVISEYVCAQVEAGADAIQIFDSWASALSEDDYREFALPYIKENVQAVKAKYPDVPVIVFSKDCNTILSEIADTGCDAVGLGWGIDIKKARTILGDRVCLQGNMDPTVLYGTPEKIKAEAAKVLRQFGQHTAQSGHVFNLGHGILPDVDPANLKLLVEFVKEESAKYH.

Residues 25–29 (RQAGR), aspartate 74, tyrosine 151, serine 206, and histidine 325 each bind substrate.

It belongs to the uroporphyrinogen decarboxylase family. Homodimer.

It is found in the cytoplasm. It catalyses the reaction uroporphyrinogen III + 4 H(+) = coproporphyrinogen III + 4 CO2. Its pathway is porphyrin-containing compound metabolism; protoporphyrin-IX biosynthesis; coproporphyrinogen-III from 5-aminolevulinate: step 4/4. Its function is as follows. Catalyzes the decarboxylation of four acetate groups of uroporphyrinogen-III to yield coproporphyrinogen-III. The protein is Uroporphyrinogen decarboxylase of Chlorobium luteolum (strain DSM 273 / BCRC 81028 / 2530) (Pelodictyon luteolum).